The primary structure comprises 62 residues: Disintegrin atropoimin (62 aa).

Residues 1–62 enclose the Disintegrin domain; it reads EAGEECDCGT…ADCPRNGLYG (62 aa). Intrachain disulfides connect C6-C21, C8-C16, C15-C38, C29-C35, and C34-C48. Residues 41-42 carry the Cell attachment site motif; it reads GD.

This sequence belongs to the venom metalloproteinase (M12B) family. P-II subfamily. P-IIa sub-subfamily. As to quaternary structure, monomer. Expressed by the venom gland.

It is found in the secreted. Functionally, inhibits ADP- (IC(50)=63 nM) and collagen-induced (IC(50)=53 nM) aggregation of human platelets. In vitro, inhibits adhesion of endothelial cells to vitronectin, type-I collagen and, to a lower degree, fibronectin and laminin. The sequence is that of Disintegrin atropoimin from Metlapilcoatlus mexicanus (Central American jumping pitviper).